Consider the following 320-residue polypeptide: MQTRKTLSWIKEEITRSISVSLMIYIITGAYISNAYPIFAQQGYENPREATGRIVCANCHLANKPVGIEVPQAVLPDTVFEAVVRIPYDMQLKQVLANGKKGALNVGAVLILPEGFELAPPDRISPEMKEKIGNLSFQSYRPAKKNILVIGPVPGQKYSEITFPILSPDPAAKKDAHFLKYPIYVGGNRGRGQIYPDGSKSNNTVYNATAAGIVSKIIRKEKGGYEITITDAPEGRQVIDSIPPGPELLVSEGESIKLDQPLTSNPNVGGFGQGDAEIVLQDPLRVQGLLFFLASVILAQIFLVLKKKQFEKVQLSEMNF.

An N-terminal signal peptide occupies residues 1–35 (MQTRKTLSWIKEEITRSISVSLMIYIITGAYISNA). Heme contacts are provided by Tyr-36, Cys-56, Cys-59, and His-60. A helical transmembrane segment spans residues 286–306 (VQGLLFFLASVILAQIFLVLK).

It belongs to the cytochrome f family. The 4 large subunits of the cytochrome b6-f complex are cytochrome b6, subunit IV (17 kDa polypeptide, petD), cytochrome f and the Rieske protein, while the 4 small subunits are PetG, PetL, PetM and PetN. The complex functions as a dimer. The cofactor is heme.

It is found in the plastid. It localises to the chloroplast thylakoid membrane. In terms of biological role, component of the cytochrome b6-f complex, which mediates electron transfer between photosystem II (PSII) and photosystem I (PSI), cyclic electron flow around PSI, and state transitions. This Populus trichocarpa (Western balsam poplar) protein is Cytochrome f.